Here is a 265-residue protein sequence, read N- to C-terminus: MSWDDEAINGSMGNDDAVLMDSWDAEIGDDEPVMQSWDAEEEEKKPAPKPKKEQPKKVKKGKESSADRALLDIDTLDEKTRKELIKKAEMESDLNNAADLFAGLGVAEEHPRARALQKEQEEQALKRPAFTKDTPIETHPLFNAETKREYQDLRKALTAAITPMNKKSPLNYSSSLAIDLIRDVAKPMSIESIRQTVATLNVLIKDKEREERQARLARVRGGTATGGAGKKKVKGKTNLGGAFKKDQDFDLDGPDDFEFGDDDFM.

The disordered stretch occupies residues 1 to 71; sequence MSWDDEAING…KESSADRALL (71 aa). Residues 23–32 show a composition bias toward acidic residues; that stretch reads WDAEIGDDEP. The segment covering 42–71 has biased composition (basic and acidic residues); it reads EEKKPAPKPKKEQPKKVKKGKESSADRALL. At S65 the chain carries Phosphoserine. Phosphothreonine is present on T75. S92 is modified (phosphoserine). The disordered stretch occupies residues 219-265; it reads VRGGTATGGAGKKKVKGKTNLGGAFKKDQDFDLDGPDDFEFGDDDFM. Omega-N-methylarginine is present on R220. The segment covering 249 to 265 has biased composition (acidic residues); that stretch reads FDLDGPDDFEFGDDDFM.

The protein belongs to the eIF-3 subunit J family. In terms of assembly, probable component of the eukaryotic translation initiation factor 3 (eIF-3) complex. Is not part of the eIF-3 core complex, with which it is associated in substochiometric amounts.

Its subcellular location is the cytoplasm. In terms of biological role, component of the eukaryotic translation initiation factor 3 (eIF-3) complex, which is involved in protein synthesis of a specialized repertoire of mRNAs and, together with other initiation factors, stimulates binding of mRNA and methionyl-tRNAi to the 40S ribosome. The eIF-3 complex specifically targets and initiates translation of a subset of mRNAs involved in cell proliferation. The polypeptide is Eukaryotic translation initiation factor 3 subunit J (Saccharomyces cerevisiae (strain ATCC 204508 / S288c) (Baker's yeast)).